The chain runs to 616 residues: tRNA uridine 5-carboxymethylaminomethyl modification enzyme MnmG (616 aa).

Residues 10–15 (GAGHAG), Val122, and Ser177 contribute to the FAD site. 271 to 285 (GPRYCPSIEDKVVRF) is an NAD(+) binding site. Residue Gln368 coordinates FAD.

The protein belongs to the MnmG family. Homodimer. Heterotetramer of two MnmE and two MnmG subunits. Requires FAD as cofactor.

Its subcellular location is the cytoplasm. Functionally, NAD-binding protein involved in the addition of a carboxymethylaminomethyl (cmnm) group at the wobble position (U34) of certain tRNAs, forming tRNA-cmnm(5)s(2)U34. This is tRNA uridine 5-carboxymethylaminomethyl modification enzyme MnmG from Malacoplasma penetrans (strain HF-2) (Mycoplasma penetrans).